Consider the following 469-residue polypeptide: Calcium-binding mitochondrial carrier protein SCaMC-2-B (469 aa).

Over 1-189 (MLCLCLYVPV…EKNTGMWWRH (189 aa)) the chain is Mitochondrial intermembrane. EF-hand domains are found at residues 47 to 80 (SYRK…RDHE), 78 to 113 (DHEK…LGVH), and 114 to 149 (ISEE…HPAE). Ca(2+)-binding residues include Asp60, Asp62, Asp64, Gln66, and Glu71. 3 Solcar repeats span residues 184-270 (GMWW…IKRL), 278-363 (LGIL…LKNS), and 375-463 (PGVF…LKIT). A helical membrane pass occupies residues 190-207 (LVAGGGAGAVSRTCTAPL). Residues 208–244 (DRLKVLMQVHATRSNSMGIAGGFTQMIREGGLRSLWR) lie on the Mitochondrial matrix side of the membrane. A helical membrane pass occupies residues 245–264 (GNGINVLKIAPESAIKFMAY). Residues 265–287 (EQIKRLIGSNQETLGILERLVSG) are Mitochondrial intermembrane-facing. A helical membrane pass occupies residues 288-301 (SLAGAIAQSSIYPM). The Mitochondrial matrix segment spans residues 302–337 (EVLKTRLALGRTGQYSGIADCAKHIFKKEGMTAFYK). A helical membrane pass occupies residues 338-357 (GYIPNMLGIIPYAGIDLAVY). The Mitochondrial intermembrane segment spans residues 358–380 (ETLKNSWLQRFATDSADPGVFVL). A helical transmembrane segment spans residues 381-398 (LACGTMSSTCGQLASYPL). Residues 399 to 437 (ALVRTRMQAQASQEGSPQMTMSGLFRHIVRTEGAIGLYR) are Mitochondrial matrix-facing. The helical transmembrane segment at 438–457 (GLAPNFMKVIPAVSISYVVY) threads the bilayer. The Mitochondrial intermembrane segment spans residues 458–469 (ENLKITLGVQSR).

It belongs to the mitochondrial carrier (TC 2.A.29) family.

It localises to the mitochondrion inner membrane. In terms of biological role, calcium-dependent mitochondrial solute carrier. This chain is Calcium-binding mitochondrial carrier protein SCaMC-2-B (slc25a25b), found in Danio rerio (Zebrafish).